Consider the following 198-residue polypeptide: Na(+)-translocating NADH-quinone reductase subunit E (198 aa).

Helical transmembrane passes span 11 to 31 (SVFI…FLAV), 35 to 55 (VSTA…AVPV), 77 to 97 (FLNF…LEMI), 110 to 130 (GIFL…SFMV), 140 to 160 (VVYG…LAGL), and 176 to 196 (LGIT…FSGI).

This sequence belongs to the NqrDE/RnfAE family. As to quaternary structure, composed of six subunits; NqrA, NqrB, NqrC, NqrD, NqrE and NqrF.

Its subcellular location is the cell inner membrane. The catalysed reaction is a ubiquinone + n Na(+)(in) + NADH + H(+) = a ubiquinol + n Na(+)(out) + NAD(+). Its function is as follows. NQR complex catalyzes the reduction of ubiquinone-1 to ubiquinol by two successive reactions, coupled with the transport of Na(+) ions from the cytoplasm to the periplasm. NqrA to NqrE are probably involved in the second step, the conversion of ubisemiquinone to ubiquinol. The chain is Na(+)-translocating NADH-quinone reductase subunit E from Haemophilus ducreyi (strain 35000HP / ATCC 700724).